Here is a 251-residue protein sequence, read N- to C-terminus: 1-(5-phosphoribosyl)-5-[(5-phosphoribosylamino)methylideneamino] imidazole-4-carboxamide isomerase (251 aa).

Catalysis depends on aspartate 8, which acts as the Proton acceptor. Aspartate 131 acts as the Proton donor in catalysis.

The protein belongs to the HisA/HisF family.

It localises to the cytoplasm. The enzyme catalyses 1-(5-phospho-beta-D-ribosyl)-5-[(5-phospho-beta-D-ribosylamino)methylideneamino]imidazole-4-carboxamide = 5-[(5-phospho-1-deoxy-D-ribulos-1-ylimino)methylamino]-1-(5-phospho-beta-D-ribosyl)imidazole-4-carboxamide. The protein operates within amino-acid biosynthesis; L-histidine biosynthesis; L-histidine from 5-phospho-alpha-D-ribose 1-diphosphate: step 4/9. This chain is 1-(5-phosphoribosyl)-5-[(5-phosphoribosylamino)methylideneamino] imidazole-4-carboxamide isomerase, found in Burkholderia thailandensis (strain ATCC 700388 / DSM 13276 / CCUG 48851 / CIP 106301 / E264).